A 74-amino-acid polypeptide reads, in one-letter code: Protein krueppel (74 aa).

4 C2H2-type zinc fingers span residues 1 to 4 (ERTH), 10 to 32 (FECP…MRLH), 38 to 60 (YHCS…LRVH), and 66 to 74 (YACELCAAK).

This sequence belongs to the krueppel C2H2-type zinc-finger protein family.

The protein localises to the nucleus. Functionally, krueppel is a gap class segmentation protein. This is Protein krueppel (Kr) from Apis mellifera (Honeybee).